We begin with the raw amino-acid sequence, 275 residues long: Elongation factor Ts (275 aa).

Residues 80-83 (TDFV) are involved in Mg(2+) ion dislocation from EF-Tu.

It belongs to the EF-Ts family.

It localises to the cytoplasm. Its function is as follows. Associates with the EF-Tu.GDP complex and induces the exchange of GDP to GTP. It remains bound to the aminoacyl-tRNA.EF-Tu.GTP complex up to the GTP hydrolysis stage on the ribosome. This chain is Elongation factor Ts, found in Clavibacter sepedonicus (Clavibacter michiganensis subsp. sepedonicus).